A 323-amino-acid chain; its full sequence is tRNA U34 carboxymethyltransferase (323 aa).

Carboxy-S-adenosyl-L-methionine contacts are provided by residues Lys91, Trp105, Lys110, Gly130, 180–181 (VE), Met196, Tyr200, and Arg315.

Belongs to the class I-like SAM-binding methyltransferase superfamily. CmoB family. In terms of assembly, homotetramer.

The enzyme catalyses carboxy-S-adenosyl-L-methionine + 5-hydroxyuridine(34) in tRNA = 5-carboxymethoxyuridine(34) in tRNA + S-adenosyl-L-homocysteine + H(+). Its function is as follows. Catalyzes carboxymethyl transfer from carboxy-S-adenosyl-L-methionine (Cx-SAM) to 5-hydroxyuridine (ho5U) to form 5-carboxymethoxyuridine (cmo5U) at position 34 in tRNAs. In Trichlorobacter lovleyi (strain ATCC BAA-1151 / DSM 17278 / SZ) (Geobacter lovleyi), this protein is tRNA U34 carboxymethyltransferase.